Consider the following 303-residue polypeptide: tRNA pseudouridine synthase B (303 aa).

Catalysis depends on aspartate 47, which acts as the Nucleophile.

The protein belongs to the pseudouridine synthase TruB family. Type 1 subfamily.

The enzyme catalyses uridine(55) in tRNA = pseudouridine(55) in tRNA. Functionally, responsible for synthesis of pseudouridine from uracil-55 in the psi GC loop of transfer RNAs. The polypeptide is tRNA pseudouridine synthase B (Legionella pneumophila subsp. pneumophila (strain Philadelphia 1 / ATCC 33152 / DSM 7513)).